A 52-amino-acid polypeptide reads, in one-letter code: Stable plasmid inheritance protein (52 aa).

A helical transmembrane segment spans residues 6 to 26; sequence SSLVWCVLIVCLTLLIFTYLT.

The protein belongs to the Hok/Gef family.

The protein resides in the cell inner membrane. Toxic component of a type I toxin-antitoxin (TA) system. Part of the plasmid maintenance system, encodes a toxic protein that collapses the transmembrane potential and arrests respiration. When the adjacent non-translated flmB (sok) gene is disrupted FlmA no longer functions in plasmid maintenance (i.e. FlmB probably encodes an antisense antitoxin RNA). Translation of FlmA may be coupled to the upstream flmC gene. This is Stable plasmid inheritance protein (flmA) from Escherichia coli O157:H7.